The following is a 286-amino-acid chain: Bark leucoagglutinin (286 aa).

The N-terminal stretch at 1 to 28 (ATSNSKPTQVLLATFLTFFFLLLNNVNS) is a signal peptide. Y73 lines the N-acetyl-alpha-neuraminyl-(2-&gt;3)-beta-D-galactosyl-(1-&gt;4)-beta-D-glucose pocket. An N-linked (GlcNAc...) asparagine glycan is attached at N89. N-acetyl-alpha-neuraminyl-(2-&gt;3)-beta-D-galactosyl-(1-&gt;4)-beta-D-glucose contacts are provided by D115 and K135. The N-linked (GlcNAc...) asparagine glycan is linked to N141. Mn(2+) contacts are provided by E155 and D157. D157, Y159, D165, and D168 together coordinate Ca(2+). N-acetyl-alpha-neuraminyl-(2-&gt;3)-beta-D-galactosyl-(1-&gt;4)-beta-D-glucose-binding residues include Y159 and D165. Mn(2+)-binding residues include D168 and H173. N-linked (GlcNAc...) asparagine glycans are attached at residues N207 and N219. A propeptide spans 278-286 (NVHIARYTA) (removed in mature form).

Belongs to the leguminous lectin family.

Sialic acid-binding lectin specifically recognizing the trisaccharide sequence Neu5Ac/Gc-alpha-2,3-Gal-beta-1,4-GlcNAc/Glc. The sequence is that of Bark leucoagglutinin from Maackia amurensis (Amur maackia).